Reading from the N-terminus, the 54-residue chain is UPF0391 membrane protein Mfla_0947/Mfla_1091 (54 aa).

Transmembrane regions (helical) follow at residues 6-26 (VIFF…IAAG) and 30-50 (IAKI…VAGI).

The protein belongs to the UPF0391 family.

It localises to the cell membrane. The polypeptide is UPF0391 membrane protein Mfla_0947/Mfla_1091 (Methylobacillus flagellatus (strain ATCC 51484 / DSM 6875 / VKM B-1610 / KT)).